The sequence spans 865 residues: MIKAIIGKIIGTRNDRWIKQYKKQVLTINALEPTYEKMSDVELQNAFEELKKRVRSTEKNLQEKTLLEVLPESFAITREASKRILKMRHFDVQLIGGMVLNDGKIAEMKTGEGKTLVATLAVALNALKGESVYVVTVNDYLAHRDSKEMEPLYHFLGYSVGTITASVRDDDERLEIYSKDIVYGTNNEFGFDYLRDNMKYSLEHKVQKSHAFAIVDEVDSILIDEARTPLIISGPVDRRMENYNKADEVAKSMQVETDFTIDEKNRTILITEEGIKKAENLFGVDNLYKIENAALSHHLDQALKANYLFFIDKDYIVANNEVVIVDEFTGRLSEGRRFSEGLHQALEAKEGVSIKEESQTLADITFQNYFRMFSKLSGMTGTAQTEATEFLEIYNLEVVSIPTNLAIKRKDLNDLIYKSEKEKFDAVILKIKELHDKGQPVLVGTASIEKSETLHALLKKERIPHTVLNAKQHTKEAEIIKDAGLKGAVTIATNMAGRGVDIKLTDEIKELGGLYIIGTERHESRRIDNQLRGRSGRQGDPGTSQFYLSLEDNLLRIFGSDRIKGVMEKLGLKDGEHIESKLVTRAVENAQKKVENLHFESRKHLLEYDDVANEQRKSVYKFRDELLDINYDISAKIAENREYALNQIFSKLKAFDHQNLSEEELLGLKNVLKEDFNAHVELEDLEKASPIEKFVAEKLKSDYENKMKVLDSEQRSRIERIVYLQILDNAWREHLYTMDNLKTGINLRGYNQKDPLVEYKKESYNLFLEFIEDIKIEAIKTFSKIQFENEQDSSDAERYLDNFSEEREHESVTYRHEETLDEDLNVAMKAFSKTPKRNEPCPCQSGKKYKDCCAKSGPKKGLFAK.

ATP-binding positions include glutamine 93, 111–115, and aspartate 501; that span reads GEGKT. Positions 841, 843, 852, and 853 each coordinate Zn(2+).

This sequence belongs to the SecA family. Monomer and homodimer. Part of the essential Sec protein translocation apparatus which comprises SecA, SecYEG and auxiliary proteins SecDF-YajC and YidC. Requires Zn(2+) as cofactor.

The protein localises to the cell inner membrane. Its subcellular location is the cytoplasm. The catalysed reaction is ATP + H2O + cellular proteinSide 1 = ADP + phosphate + cellular proteinSide 2.. In terms of biological role, part of the Sec protein translocase complex. Interacts with the SecYEG preprotein conducting channel. Has a central role in coupling the hydrolysis of ATP to the transfer of proteins into and across the cell membrane, serving as an ATP-driven molecular motor driving the stepwise translocation of polypeptide chains across the membrane. The sequence is that of Protein translocase subunit SecA from Helicobacter pylori (strain HPAG1).